A 389-amino-acid polypeptide reads, in one-letter code: ATP phosphoribosyltransferase regulatory subunit (389 aa).

It belongs to the class-II aminoacyl-tRNA synthetase family. HisZ subfamily. In terms of assembly, heteromultimer composed of HisG and HisZ subunits.

It localises to the cytoplasm. Its pathway is amino-acid biosynthesis; L-histidine biosynthesis; L-histidine from 5-phospho-alpha-D-ribose 1-diphosphate: step 1/9. Functionally, required for the first step of histidine biosynthesis. May allow the feedback regulation of ATP phosphoribosyltransferase activity by histidine. The sequence is that of ATP phosphoribosyltransferase regulatory subunit from Moorella thermoacetica (strain ATCC 39073 / JCM 9320).